Consider the following 477-residue polypeptide: Ribulose bisphosphate carboxylase large chain (477 aa).

A propeptide spanning residues 1–2 (MS) is cleaved from the precursor. N-acetylproline is present on P3. Residue K14 is modified to N6,N6,N6-trimethyllysine. Positions 123 and 173 each coordinate substrate. K175 functions as the Proton acceptor in the catalytic mechanism. K177 lines the substrate pocket. The Mg(2+) site is built by K201, D203, and E204. Position 201 is an N6-carboxylysine (K201). H294 acts as the Proton acceptor in catalysis. Positions 295, 327, and 379 each coordinate substrate.

Belongs to the RuBisCO large chain family. Type I subfamily. As to quaternary structure, heterohexadecamer of 8 large chains and 8 small chains; disulfide-linked. The disulfide link is formed within the large subunit homodimers. Requires Mg(2+) as cofactor. In terms of processing, the disulfide bond which can form in the large chain dimeric partners within the hexadecamer appears to be associated with oxidative stress and protein turnover.

Its subcellular location is the plastid. It localises to the chloroplast. The catalysed reaction is 2 (2R)-3-phosphoglycerate + 2 H(+) = D-ribulose 1,5-bisphosphate + CO2 + H2O. It catalyses the reaction D-ribulose 1,5-bisphosphate + O2 = 2-phosphoglycolate + (2R)-3-phosphoglycerate + 2 H(+). Functionally, ruBisCO catalyzes two reactions: the carboxylation of D-ribulose 1,5-bisphosphate, the primary event in carbon dioxide fixation, as well as the oxidative fragmentation of the pentose substrate in the photorespiration process. Both reactions occur simultaneously and in competition at the same active site. This Digitalis purpurea (Common foxglove) protein is Ribulose bisphosphate carboxylase large chain.